The chain runs to 123 residues: MKSLLFTLAVFMLLAQLVSGNLYVKRCLNDIGICKKTCKPEEVRSEHGWVMCGKRKACCVPADKRSAYPSFCVHSKTTKTSTVTARATATTATTATAATPLMISNGLISLMTTMAATPVSPTT.

The first 20 residues, 1 to 20 (MKSLLFTLAVFMLLAQLVSG), serve as a signal peptide directing secretion. The interval 21 to 63 (NLYVKRCLNDIGICKKTCKPEEVRSEHGWVMCGKRKACCVPAD) is in vitro binds to LPS, mediates antimicrobial activity and inhibits LPS-mediated inflammation. Cystine bridges form between Cys-27-Cys-58, Cys-34-Cys-52, and Cys-38-Cys-59.

This sequence belongs to the beta-defensin family. As to quaternary structure, homodimer or homooligomer; disulfide-linked. In terms of processing, O-glycosylated; glycans contain sialic acids alpha(2,3)-linked to galactose and N-acetylgalactosamine. The C-terminal O-glycosylation contributes substantially to the sperm glyocalyx. High-level and epididymis-specific expression. Detected in epithelial cells lining the efferent ductules, initial segment, and cauda regions of the epididymis, but not on spermatozoa.

The protein localises to the secreted. Its function is as follows. Highly glycosylated atypical beta-defensin involved in several aspects of sperm function. Facilitates sperm transport in the female reproductive tract and contributes to sperm protection against immunodetection; both functions are probably implicating the negative surface charge provided by its O-linked oligosaccharides in the sperm glycocalyx. Involved in binding of sperm to oviductal epithelial cells to form a sperm reservoir until ovulation. Release from the sperm surface during capacitation and ovaluation by an elevation of oviductal fluid pH is unmasking other surface components and allows sperm to penetrate the cumulus matrix and bind to the zona pellucida of the oocyte. In vitro has antimicrobial activity and may inhibit LPS-mediated inflammation. The chain is Beta-defensin 126 (DEFB126) from Macaca fascicularis (Crab-eating macaque).